The following is a 115-amino-acid chain: UPF0102 protein Kole_1919 (115 aa).

This sequence belongs to the UPF0102 family.

In Kosmotoga olearia (strain ATCC BAA-1733 / DSM 21960 / TBF 19.5.1), this protein is UPF0102 protein Kole_1919.